A 282-amino-acid polypeptide reads, in one-letter code: Bis(5'-nucleosyl)-tetraphosphatase, symmetrical (282 aa).

It belongs to the Ap4A hydrolase family.

It carries out the reaction P(1),P(4)-bis(5'-adenosyl) tetraphosphate + H2O = 2 ADP + 2 H(+). Its function is as follows. Hydrolyzes diadenosine 5',5'''-P1,P4-tetraphosphate to yield ADP. The protein is Bis(5'-nucleosyl)-tetraphosphatase, symmetrical of Enterobacter sp. (strain 638).